The following is a 740-amino-acid chain: NAD(P)H-quinone oxidoreductase subunit 5, chloroplastic (740 aa).

16 consecutive transmembrane segments (helical) span residues 9 to 29 (WIIP…LILF), 40 to 60 (WAFQ…YLSI), 89 to 109 (IDPL…MVLI), 125 to 145 (FAYM…SNLI), 147 to 167 (IYIF…FWFT), 185 to 205 (GDFG…SFEF), 219 to 239 (NEVN…GAVS), 258 to 278 (TPIS…FLVA), 286 to 306 (VIPY…LLGA), 327 to 347 (LGYM…FHLI), 354 to 374 (ALLF…VGYS), 396 to 416 (ITFL…CFWS), 425 to 445 (WLYS…TAFY), 543 to 563 (LFPI…GIPF), 602 to 622 (VVSV…YKPV), and 717 to 737 (SYLF…YLLF).

The protein belongs to the complex I subunit 5 family. NDH is composed of at least 16 different subunits, 5 of which are encoded in the nucleus.

The protein resides in the plastid. It is found in the chloroplast thylakoid membrane. The enzyme catalyses a plastoquinone + NADH + (n+1) H(+)(in) = a plastoquinol + NAD(+) + n H(+)(out). The catalysed reaction is a plastoquinone + NADPH + (n+1) H(+)(in) = a plastoquinol + NADP(+) + n H(+)(out). In terms of biological role, NDH shuttles electrons from NAD(P)H:plastoquinone, via FMN and iron-sulfur (Fe-S) centers, to quinones in the photosynthetic chain and possibly in a chloroplast respiratory chain. The immediate electron acceptor for the enzyme in this species is believed to be plastoquinone. Couples the redox reaction to proton translocation, and thus conserves the redox energy in a proton gradient. This Solanum bulbocastanum (Wild potato) protein is NAD(P)H-quinone oxidoreductase subunit 5, chloroplastic (ndhF).